Consider the following 428-residue polypeptide: Maltoporin (428 aa).

The first 24 residues, 1 to 24 (MTTLRKLPIALAVAAGVLSTQAMA), serve as a signal peptide directing secretion.

It belongs to the porin LamB (TC 1.B.3) family. Homotrimer formed of three 18-stranded antiparallel beta-barrels, containing three independent channels.

The protein resides in the cell outer membrane. It carries out the reaction beta-maltose(in) = beta-maltose(out). Functionally, involved in the transport of maltose and maltodextrins. The chain is Maltoporin from Yersinia enterocolitica serotype O:8 / biotype 1B (strain NCTC 13174 / 8081).